The chain runs to 332 residues: Ribose-phosphate pyrophosphokinase (332 aa).

55-57 provides a ligand contact to ATP; the sequence is DGE. The Mg(2+) site is built by His148 and Asp187. Residue Lys211 is part of the active site. D-ribose 5-phosphate contacts are provided by residues Arg213, Asp237, and 241–245; that span reads DTGGT.

It belongs to the ribose-phosphate pyrophosphokinase family. Class I subfamily. Homohexamer. Mg(2+) is required as a cofactor.

It localises to the cytoplasm. It carries out the reaction D-ribose 5-phosphate + ATP = 5-phospho-alpha-D-ribose 1-diphosphate + AMP + H(+). Its pathway is metabolic intermediate biosynthesis; 5-phospho-alpha-D-ribose 1-diphosphate biosynthesis; 5-phospho-alpha-D-ribose 1-diphosphate from D-ribose 5-phosphate (route I): step 1/1. In terms of biological role, involved in the biosynthesis of the central metabolite phospho-alpha-D-ribosyl-1-pyrophosphate (PRPP) via the transfer of pyrophosphoryl group from ATP to 1-hydroxyl of ribose-5-phosphate (Rib-5-P). The protein is Ribose-phosphate pyrophosphokinase of Prochlorococcus marinus (strain MIT 9313).